Here is a 417-residue protein sequence, read N- to C-terminus: Phosphatidylcholine:ceramide cholinephosphotransferase 1 (417 aa).

An SAM domain is found at tryptophan 11–alanine 74. Transmembrane regions (helical) follow at residues phenylalanine 140–valine 160, phenylalanine 188–leucine 208, phenylalanine 219–leucine 239, methionine 280–isoleucine 300, and leucine 308–leucine 328. Residue histidine 289 is part of the active site. The Cytoplasmic segment spans residues alanine 329 to threonine 417. Catalysis depends on residues histidine 332 and aspartate 336.

It belongs to the sphingomyelin synthase family.

It localises to the golgi apparatus membrane. The enzyme catalyses an N-acylsphing-4-enine + a 1,2-diacyl-sn-glycero-3-phosphocholine = a sphingomyelin + a 1,2-diacyl-sn-glycerol. It catalyses the reaction an N-acylsphing-4-enine + a 1,2-diacyl-sn-glycero-3-phosphoethanolamine = an N-acylsphing-4-enine 1-phosphoethanolamine + a 1,2-diacyl-sn-glycerol. Its function is as follows. Major sphingomyelin synthase at the Golgi apparatus. Catalyzes the reversible transfer of phosphocholine moiety in sphingomyelin biosynthesis: in the forward reaction transfers phosphocholine head group of phosphatidylcholine (PC) on to ceramide (CER) to form ceramide phosphocholine (sphingomyelin, SM) and diacylglycerol (DAG) as by-product, and in the reverse reaction transfers phosphocholine from SM to DAG to form PC and CER. The direction of the reaction depends on the levels of CER and DAG in Golgi membranes. Converts the newly synthesized CER, that is transported from the endoplasmic reticulum to the trans-Golgi by the Cer transport protein (CERT), to SM. Can form a heteromeric complex with glucosylceramide synthase (GCS) increasing SMS activity and reducing glucosylceramide synthesis, a critical mechanism that controls the metabolic fate of CER in the Golgi. Does not use free phosphorylcholine or CDP-choline as donor. Can also transfer phosphoethanolamine head group of phosphatidylethanolamine (PE) on to CER to form ceramide phosphoethanolamine (CPE). Regulates receptor-mediated signal transduction via mitogenic DAG and proapoptotic CER, as well as via SM, a structural component of membrane rafts that serve as platforms for signal transduction and protein sorting. Plays a role in secretory transport via regulation of DAG pool at the Golgi apparatus and its downstream effects on PRKD1. The sequence is that of Phosphatidylcholine:ceramide cholinephosphotransferase 1 (SGMS1) from Gallus gallus (Chicken).